Here is a 406-residue protein sequence, read N- to C-terminus: 4-hydroxy-3-methylbut-2-enyl diphosphate reductase (406 aa).

Position 66 (Cys-66) interacts with [4Fe-4S] cluster. Position 96 (His-96) interacts with (2E)-4-hydroxy-3-methylbut-2-enyl diphosphate. His-96 is a dimethylallyl diphosphate binding site. His-96 provides a ligand contact to isopentenyl diphosphate. Cys-157 is a binding site for [4Fe-4S] cluster. A (2E)-4-hydroxy-3-methylbut-2-enyl diphosphate-binding site is contributed by His-185. His-185 lines the dimethylallyl diphosphate pocket. His-185 contributes to the isopentenyl diphosphate binding site. Glu-187 functions as the Proton donor in the catalytic mechanism. Thr-250 serves as a coordination point for (2E)-4-hydroxy-3-methylbut-2-enyl diphosphate. Position 288 (Cys-288) interacts with [4Fe-4S] cluster. (2E)-4-hydroxy-3-methylbut-2-enyl diphosphate-binding residues include Ser-317, Ser-318, Asn-319, and Ser-379. Residues Ser-317, Ser-318, Asn-319, and Ser-379 each contribute to the dimethylallyl diphosphate site. 4 residues coordinate isopentenyl diphosphate: Ser-317, Ser-318, Asn-319, and Ser-379.

This sequence belongs to the IspH family. [4Fe-4S] cluster is required as a cofactor.

It carries out the reaction isopentenyl diphosphate + 2 oxidized [2Fe-2S]-[ferredoxin] + H2O = (2E)-4-hydroxy-3-methylbut-2-enyl diphosphate + 2 reduced [2Fe-2S]-[ferredoxin] + 2 H(+). The catalysed reaction is dimethylallyl diphosphate + 2 oxidized [2Fe-2S]-[ferredoxin] + H2O = (2E)-4-hydroxy-3-methylbut-2-enyl diphosphate + 2 reduced [2Fe-2S]-[ferredoxin] + 2 H(+). The protein operates within isoprenoid biosynthesis; dimethylallyl diphosphate biosynthesis; dimethylallyl diphosphate from (2E)-4-hydroxy-3-methylbutenyl diphosphate: step 1/1. It participates in isoprenoid biosynthesis; isopentenyl diphosphate biosynthesis via DXP pathway; isopentenyl diphosphate from 1-deoxy-D-xylulose 5-phosphate: step 6/6. In terms of biological role, catalyzes the conversion of 1-hydroxy-2-methyl-2-(E)-butenyl 4-diphosphate (HMBPP) into a mixture of isopentenyl diphosphate (IPP) and dimethylallyl diphosphate (DMAPP). Acts in the terminal step of the DOXP/MEP pathway for isoprenoid precursor biosynthesis. In Synechococcus sp. (strain RCC307), this protein is 4-hydroxy-3-methylbut-2-enyl diphosphate reductase.